The following is a 487-amino-acid chain: MNKFARHFLPLSLRVRFLLATAGVVLVLSLAYGIVALVGYSVSFDKTTFRLLRGESNLFYTLAKWENNKISVELPENLDMQSPTMTLIYDETGKLLWTQRNIPWLIKSIQPEWLKTNGFHEIETNVDATSTLLSEDHSAQEKLKEVREDDDDAEMTHSVAVNIYPATARMPQLTIVVVDTIPIELKRSYMVWSWFVYVLAANLLLVIPLLWIAAWWSLRPIEALAREVRELEDHHREMLNPETTRELTSLVRNLNQLLKSERERYNKYRTTLTDLTHSLKTPLAVLQSTLRSLRNEKMSVSKAEPVMLEQISRISQQIGYYLHRASMRGSGVLLSRELHPVAPLLDNLISALNKVYQRKGVNISMDISPEISFVGEQNDFVEVMGNVLDNACKYCLEFVEISARQTDDHLHIFVEDDGPGIPHSKRSLVFDRGQRADTLRPGQGVGLAVAREITEQYAGQIIASDSLLGGARMEVVFGRQHPTQKEE.

Over 1–16 the chain is Cytoplasmic; the sequence is MNKFARHFLPLSLRVR. A helical membrane pass occupies residues 17 to 37; the sequence is FLLATAGVVLVLSLAYGIVAL. The Periplasmic portion of the chain corresponds to 38–193; that stretch reads VGYSVSFDKT…ELKRSYMVWS (156 aa). 2 residues coordinate a divalent metal cation: aspartate 151 and aspartate 152. A helical transmembrane segment spans residues 194–214; it reads WFVYVLAANLLLVIPLLWIAA. The region spanning 215–266 is the HAMP domain; that stretch reads WWSLRPIEALAREVRELEDHHREMLNPETTRELTSLVRNLNQLLKSERERYN. The Cytoplasmic portion of the chain corresponds to 215–487; the sequence is WWSLRPIEAL…GRQHPTQKEE (273 aa). The Histidine kinase domain occupies 274–481; that stretch reads DLTHSLKTPL…RMEVVFGRQH (208 aa). A Phosphohistidine; by autocatalysis modification is found at histidine 277. Asparagine 386 provides a ligand contact to Mg(2+). ATP is bound by residues 386–394, 416–421, and 435–447; these read NVLDNACKY, DDGPGI, and RADTLRPGQGVGL. Glutamine 443 is a binding site for Mg(2+).

Homodimer.

It localises to the cell inner membrane. It carries out the reaction ATP + protein L-histidine = ADP + protein N-phospho-L-histidine.. In terms of biological role, member of the two-component regulatory system PhoP/PhoQ which regulates the expression of genes involved in virulence and resistance to host defense antimicrobial peptides. In low periplasmic Mg(2+), PhoQ functions as a membrane-associated protein kinase that undergoes autophosphorylation and subsequently transfers the phosphate to PhoP, which results in the expression of PhoP-activated genes (PAG) and repression of PhoP-repressed genes (PRG). In high periplasmic Mg(2+), acts as a protein phosphatase that dephosphorylates phospho-PhoP, which results in the repression of PAG and may lead to expression of some PRG. The protein is Virulence sensor histidine kinase PhoQ (phoQ) of Salmonella paratyphi A (strain ATCC 9150 / SARB42).